Here is a 937-residue protein sequence, read N- to C-terminus: Bifunctional glutamine synthetase adenylyltransferase/adenylyl-removing enzyme (937 aa).

An adenylyl removase region spans residues 1–436; sequence MSQPIPSASP…AAEFAELLAP (436 aa). Positions 443-937 are adenylyl transferase; the sequence is PDTLADYWRA…QLRFQPGKGA (495 aa).

This sequence belongs to the GlnE family. Mg(2+) serves as cofactor.

The catalysed reaction is [glutamine synthetase]-O(4)-(5'-adenylyl)-L-tyrosine + phosphate = [glutamine synthetase]-L-tyrosine + ADP. It catalyses the reaction [glutamine synthetase]-L-tyrosine + ATP = [glutamine synthetase]-O(4)-(5'-adenylyl)-L-tyrosine + diphosphate. Functionally, involved in the regulation of glutamine synthetase GlnA, a key enzyme in the process to assimilate ammonia. When cellular nitrogen levels are high, the C-terminal adenylyl transferase (AT) inactivates GlnA by covalent transfer of an adenylyl group from ATP to specific tyrosine residue of GlnA, thus reducing its activity. Conversely, when nitrogen levels are low, the N-terminal adenylyl removase (AR) activates GlnA by removing the adenylyl group by phosphorolysis, increasing its activity. The regulatory region of GlnE binds the signal transduction protein PII (GlnB) which indicates the nitrogen status of the cell. The chain is Bifunctional glutamine synthetase adenylyltransferase/adenylyl-removing enzyme from Xanthomonas campestris pv. campestris (strain ATCC 33913 / DSM 3586 / NCPPB 528 / LMG 568 / P 25).